The following is a 582-amino-acid chain: Spermatogenesis-associated protein 7 homolog (582 aa).

2 disordered regions span residues 167–192 (LMSG…CDRR) and 251–289 (RKDF…EVNI). 2 stretches are compositionally biased toward polar residues: residues 169–181 (SGTQ…SPSR) and 262–274 (ETQT…NSEL).

As to quaternary structure, found in a complex with CFAP410, NEK1 and SPATA7. Interacts with NEK1. Interacts with RPGRIP1. Interacts with RPGR. Interacts with NPHP4. Interacts with NPHP1. Interacts with AHI1. Expressed in the retina (at protein level). Expressed in the choroid region and retinal pigment endothelium, within the photoreceptor layer (at protein level).

It localises to the cytoplasm. It is found in the cytoskeleton. Its subcellular location is the cilium axoneme. The protein resides in the cilium basal body. The protein localises to the cell projection. It localises to the cilium. It is found in the photoreceptor outer segment. Involved in the maintenance of both rod and cone photoreceptor cells. Required for photoreceptor-specific localization of proximal connecting cilium (CC) proteins RPGR, AHI1, NPHP1, NPHP4, and RPGRIP1 at the distal CC, a photoreceptor-specific extension of the primary cilium transition zone. Maintenance of protein localization at the photoreceptor-specific distal CC is essential for normal microtubule stability and to prevent photoreceptor degeneration. The chain is Spermatogenesis-associated protein 7 homolog (Spata7) from Mus musculus (Mouse).